A 328-amino-acid polypeptide reads, in one-letter code: D-cysteine desulfhydrase (328 aa).

Lys-51 carries the post-translational modification N6-(pyridoxal phosphate)lysine.

Belongs to the ACC deaminase/D-cysteine desulfhydrase family. Homodimer. The cofactor is pyridoxal 5'-phosphate.

It carries out the reaction D-cysteine + H2O = hydrogen sulfide + pyruvate + NH4(+) + H(+). Functionally, catalyzes the alpha,beta-elimination reaction of D-cysteine and of several D-cysteine derivatives. It could be a defense mechanism against D-cysteine. This is D-cysteine desulfhydrase from Klebsiella pneumoniae subsp. pneumoniae (strain ATCC 700721 / MGH 78578).